The primary structure comprises 590 residues: Glutamine--fructose-6-phosphate aminotransferase [isomerizing] (590 aa).

Cys-2 acts as the Nucleophile; for GATase activity in catalysis. One can recognise a Glutamine amidotransferase type-2 domain in the interval 2 to 221 (CGIIGIVSSK…DGELGFITTS (220 aa)). SIS domains lie at 286–422 (IIAE…DNTN) and 445–580 (IGEE…PDKP). Residue Lys-585 is the For Fru-6P isomerization activity of the active site.

In terms of assembly, homodimer.

Its subcellular location is the cytoplasm. The catalysed reaction is D-fructose 6-phosphate + L-glutamine = D-glucosamine 6-phosphate + L-glutamate. Functionally, catalyzes the first step in hexosamine metabolism, converting fructose-6P into glucosamine-6P using glutamine as a nitrogen source. This Sulfolobus acidocaldarius (strain ATCC 33909 / DSM 639 / JCM 8929 / NBRC 15157 / NCIMB 11770) protein is Glutamine--fructose-6-phosphate aminotransferase [isomerizing].